Reading from the N-terminus, the 431-residue chain is tRNA(Ile)-lysidine synthase (431 aa).

Residue 26-31 (SGGVDS) participates in ATP binding.

The protein belongs to the tRNA(Ile)-lysidine synthase family.

Its subcellular location is the cytoplasm. It carries out the reaction cytidine(34) in tRNA(Ile2) + L-lysine + ATP = lysidine(34) in tRNA(Ile2) + AMP + diphosphate + H(+). Functionally, ligates lysine onto the cytidine present at position 34 of the AUA codon-specific tRNA(Ile) that contains the anticodon CAU, in an ATP-dependent manner. Cytidine is converted to lysidine, thus changing the amino acid specificity of the tRNA from methionine to isoleucine. In Wolbachia pipientis wMel, this protein is tRNA(Ile)-lysidine synthase.